Here is an 81-residue protein sequence, read N- to C-terminus: MRKGSVKEVLAKIKYDPREKEEDYYVVIEHRGAYGGEKKIPVELIELGHGYFFVGEAQIPYHRILRVVRKDGKVIWETKKL.

The protein belongs to the UPF0248 family.

This Thermococcus kodakarensis (strain ATCC BAA-918 / JCM 12380 / KOD1) (Pyrococcus kodakaraensis (strain KOD1)) protein is UPF0248 protein TK0315.